The primary structure comprises 1407 residues: DNA-directed RNA polymerase subunit beta' (1407 aa).

4 residues coordinate Zn(2+): Cys-70, Cys-72, Cys-85, and Cys-88. Residues Asp-460, Asp-462, and Asp-464 each coordinate Mg(2+). 4 residues coordinate Zn(2+): Cys-814, Cys-888, Cys-895, and Cys-898. The residue at position 972 (Lys-972) is an N6-acetyllysine.

This sequence belongs to the RNA polymerase beta' chain family. As to quaternary structure, the RNAP catalytic core consists of 2 alpha, 1 beta, 1 beta' and 1 omega subunit. When a sigma factor is associated with the core the holoenzyme is formed, which can initiate transcription. Requires Mg(2+) as cofactor. It depends on Zn(2+) as a cofactor.

The catalysed reaction is RNA(n) + a ribonucleoside 5'-triphosphate = RNA(n+1) + diphosphate. Its function is as follows. DNA-dependent RNA polymerase catalyzes the transcription of DNA into RNA using the four ribonucleoside triphosphates as substrates. This is DNA-directed RNA polymerase subunit beta' from Shigella sonnei (strain Ss046).